Reading from the N-terminus, the 327-residue chain is Probable cytosolic iron-sulfur protein assembly protein CIAO1 homolog (327 aa).

WD repeat units follow at residues 3 to 42, 48 to 87, 92 to 131, 137 to 176, 181 to 220, 239 to 278, and 290 to 327; these read GHED…WICK, GHQR…FECN, GHEN…EYEC, SHTQ…WSCC, GHES…NQEG, YHDR…DRNQ, and AHSM…PAEE.

The protein belongs to the WD repeat CIA1 family.

Its function is as follows. Essential component of the cytosolic iron-sulfur (Fe/S) protein assembly machinery. Required for the maturation of extramitochondrial Fe/S proteins. This is Probable cytosolic iron-sulfur protein assembly protein CIAO1 homolog from Nematostella vectensis (Starlet sea anemone).